The chain runs to 262 residues: Versicolorin reductase 1 (262 aa).

The NADP(+) site is built by Ile-21, Asp-67, Asn-94, and Arg-127. Active-site proton donor residues include Ser-143 and Ser-144. Residues Tyr-158, Lys-162, Ile-191, and Thr-193 each coordinate NADP(+). The active-site Proton acceptor is Tyr-158. Catalysis depends on Lys-162, which acts as the Lowers pKa of active site Tyr.

The protein belongs to the short-chain dehydrogenases/reductases (SDR) family.

It is found in the cytoplasm. The protein resides in the cytosol. It carries out the reaction (4S,8R)-2,13,16,20-tetrahydroxy-7,9-dioxapentacyclo[10.8.0.0(3,10).0(4,8).0(14,19)]icosa-1(12),2,5,10,13,16,19-heptaen-18-one + NADPH + H(+) = (4S,8R,16R)-2,13,16,20-tetrahydroxy-7,9-dioxapentacyclo[10.8.0.0(3,10).0(4,8).0(14,19)]icosa-1(12),2,5,10,13,19-hexaen-18-one + NADP(+). The protein operates within mycotoxin biosynthesis; aflatoxin biosynthesis. In terms of biological role, cytochrome P450 monooxygenase; part of the gene cluster that mediates the biosynthesis of aflatoxins, a group of polyketide-derived furanocoumarins, and part of the most toxic and carcinogenic compounds among the known mycotoxins. The four major aflatoxins produced by A.parasiticus are aflatoxin B1 (AFB1), aflatoxin B2 (AFB2), aflatoxin G1 (AFG1) and aflatoxin G2 (AFG2). Within the aflatoxin pathway, with the cytochrome P450 monooxygenase aflN, the versicolorin reductase aflM, is involved in conversion of VERA to demethylsterigmatocystin (DMST). The biosynthesis of aflatoxins begins with the norsolorinic acid synthase aflC that combines a hexanoyl starter unit produced by the fatty acid synthase aflA/aflB and 7 malonyl-CoA extender units to synthesize the precursor NOR. The second step is the conversion of NOR to averantin and requires the norsolorinic acid ketoreductase aflD, which catalyzes the dehydration of norsolorinic acid to form (1'S)-averantin. The norsolorinic acid reductases aflE and aflF may also play a role in the conversion of NOR to AVN. The cytochrome P450 monooxygenase aflG then catalyzes the hydroxylation of AVN to 5'hydroxyaverantin (HAVN). The next step is performed by the 5'-hydroxyaverantin dehydrogenase aflH that transforms HAVN to 5'-oxoaverantin (OAVN) which is further converted to averufin (AVF) by aflK that plays a dual role in the pathway, as a 5'-oxoaverantin cyclase that mediates conversion of 5'-oxoaverantin, as well as a versicolorin B synthase in a later step in the pathway. The averufin oxidase aflI catalyzes the conversion of AVF to versiconal hemiacetal acetate (VHA). VHA is then the substrate for the versiconal hemiacetal acetate esterase aflJ to yield versiconal (VAL). Versicolorin B synthase aflK then converts VAL to versicolorin B (VERB) by closing the bisfuran ring of aflatoxin which is required for DNA-binding, thus giving to aflatoxin its activity as a mutagen. Then, the activity of the versicolorin B desaturase aflL leads to versicolorin A (VERA). A branch point starts from VERB since it can also be converted to dihydrodemethylsterigmatocystin (DMDHST), probably also by aflL, VERA being a precursor for aflatoxins B1 and G1, and DMDHST for aflatoxins B2 and G2. Next, the versicolorin reductase aflM and the cytochrome P450 monooxygenase aflN are involved in conversion of VERA to demethylsterigmatocystin (DMST). AflX and aflY seem also involved in this step, through probable aflX-mediated epoxide ring-opening step following versicolorin A oxidation and aflY-mediated Baeyer-Villiger oxidation required for the formation of the xanthone ring. The methyltransferase aflO then leads to the modification of DMST to sterigmatocystin (ST), and of DMDHST to dihydrosterigmatocystin (DHST). Both ST and DHST are then substrates of the O-methyltransferase aflP to yield O-methylsterigmatocystin (OMST) and dihydro-O-methylsterigmatocystin (DHOMST), respectively. Finally OMST is converted to aflatoxins B1 and G1, and DHOMST to aflatoxins B2 and G2, via the action of several enzymes including O-methylsterigmatocystin oxidoreductase aflQ, the cytochrome P450 monooxygenase aflU, but also the NADH-dependent flavin oxidoreductase nadA which is specifically required for the synthesis of AFG1. The polypeptide is Versicolorin reductase 1 (Aspergillus parasiticus (strain ATCC 56775 / NRRL 5862 / SRRC 143 / SU-1)).